Reading from the N-terminus, the 293-residue chain is Bifunctional protein FolD (293 aa).

NADP(+) is bound by residues 164 to 166, Ser193, and Thr234; that span reads GRS.

It belongs to the tetrahydrofolate dehydrogenase/cyclohydrolase family. As to quaternary structure, homodimer.

It catalyses the reaction (6R)-5,10-methylene-5,6,7,8-tetrahydrofolate + NADP(+) = (6R)-5,10-methenyltetrahydrofolate + NADPH. It carries out the reaction (6R)-5,10-methenyltetrahydrofolate + H2O = (6R)-10-formyltetrahydrofolate + H(+). It functions in the pathway one-carbon metabolism; tetrahydrofolate interconversion. In terms of biological role, catalyzes the oxidation of 5,10-methylenetetrahydrofolate to 5,10-methenyltetrahydrofolate and then the hydrolysis of 5,10-methenyltetrahydrofolate to 10-formyltetrahydrofolate. This is Bifunctional protein FolD from Azobacteroides pseudotrichonymphae genomovar. CFP2.